The chain runs to 502 residues: Glycerol kinase (502 aa).

Threonine 14 serves as a coordination point for ADP. Threonine 14, threonine 15, and serine 16 together coordinate ATP. Threonine 14 is a binding site for sn-glycerol 3-phosphate. Arginine 18 serves as a coordination point for ADP. Sn-glycerol 3-phosphate-binding residues include arginine 84, glutamate 85, and tyrosine 136. Glycerol contacts are provided by arginine 84, glutamate 85, and tyrosine 136. At histidine 232 the chain carries Phosphohistidine; by HPr. Position 246 (aspartate 246) interacts with sn-glycerol 3-phosphate. Glycerol-binding residues include aspartate 246 and glutamine 247. 2 residues coordinate ADP: threonine 268 and glycine 311. ATP is bound by residues threonine 268, glycine 311, glutamine 315, and glycine 412. Glycine 412 and asparagine 416 together coordinate ADP.

The protein belongs to the FGGY kinase family. As to quaternary structure, homotetramer and homodimer (in equilibrium). In terms of processing, the phosphoenolpyruvate-dependent sugar phosphotransferase system (PTS), including enzyme I, and histidine-containing protein (HPr) are required for the phosphorylation, which leads to the activation of the enzyme.

The catalysed reaction is glycerol + ATP = sn-glycerol 3-phosphate + ADP + H(+). The protein operates within polyol metabolism; glycerol degradation via glycerol kinase pathway; sn-glycerol 3-phosphate from glycerol: step 1/1. Activated by phosphorylation and inhibited by fructose 1,6-bisphosphate (FBP). Its function is as follows. Key enzyme in the regulation of glycerol uptake and metabolism. Catalyzes the phosphorylation of glycerol to yield sn-glycerol 3-phosphate. The polypeptide is Glycerol kinase (Streptococcus pneumoniae (strain 70585)).